Here is a 203-residue protein sequence, read N- to C-terminus: Glycerol-3-phosphate acyltransferase (203 aa).

The next 5 helical transmembrane spans lie at 13 to 33, 62 to 82, 88 to 108, 118 to 138, and 159 to 179; these read TLAC…LILT, LAAA…AIAS, AGIA…WLSF, IGVL…IWLA, and IALY…MTAI.

It belongs to the PlsY family. In terms of assembly, probably interacts with PlsX.

It is found in the cell inner membrane. It carries out the reaction an acyl phosphate + sn-glycerol 3-phosphate = a 1-acyl-sn-glycero-3-phosphate + phosphate. It functions in the pathway lipid metabolism; phospholipid metabolism. Catalyzes the transfer of an acyl group from acyl-phosphate (acyl-PO(4)) to glycerol-3-phosphate (G3P) to form lysophosphatidic acid (LPA). This enzyme utilizes acyl-phosphate as fatty acyl donor, but not acyl-CoA or acyl-ACP. The chain is Glycerol-3-phosphate acyltransferase from Rhizobium meliloti (strain 1021) (Ensifer meliloti).